We begin with the raw amino-acid sequence, 646 residues long: Heat shock 70 kDa protein (646 aa).

Positions 613-632 are enriched in gly residues; it reads GGAPGGMPGAAPGGFPGGAP. Positions 613–646 are disordered; sequence GGAPGGMPGAAPGGFPGGAPGSNDNEGPTVEEVD.

It belongs to the heat shock protein 70 family.

The sequence is that of Heat shock 70 kDa protein (hsps-1) from Neurospora crassa (strain ATCC 24698 / 74-OR23-1A / CBS 708.71 / DSM 1257 / FGSC 987).